The chain runs to 151 residues: Protein ripply1 (151 aa).

The short motif at 57–60 (WRPW) is the WRPW motif element. Residues 96–131 (HPVRLFWPKSRSFDYLYSAGEILLQNFPVQATINLY) are ripply homology domain. Positions 130 to 151 (LYEDSDSEEEEEDEEQEDEEEK) are disordered. Over residues 132–151 (EDSDSEEEEEDEEQEDEEEK) the composition is skewed to acidic residues.

The protein belongs to the ripply family.

It localises to the nucleus. In terms of biological role, plays a role in somitogenesis. Essential for transcriptional repression of the segmental patterning genes, thus terminating the segmentation program in the presomitic mesoderm, and also required for the maintenance of rostrocaudal polarity in somites. The chain is Protein ripply1 from Homo sapiens (Human).